A 118-amino-acid chain; its full sequence is Small ribosomal subunit protein uS13 (118 aa).

Residues serine 94 to arginine 118 are disordered.

It belongs to the universal ribosomal protein uS13 family. In terms of assembly, part of the 30S ribosomal subunit. Forms a loose heterodimer with protein S19. Forms two bridges to the 50S subunit in the 70S ribosome.

Its function is as follows. Located at the top of the head of the 30S subunit, it contacts several helices of the 16S rRNA. In the 70S ribosome it contacts the 23S rRNA (bridge B1a) and protein L5 of the 50S subunit (bridge B1b), connecting the 2 subunits; these bridges are implicated in subunit movement. Contacts the tRNAs in the A and P-sites. This is Small ribosomal subunit protein uS13 from Photobacterium profundum (strain SS9).